Reading from the N-terminus, the 492-residue chain is Ketol-acid reductoisomerase (NADP(+)) (492 aa).

Positions 14-208 (LDQLGKCRFM…GGHRAGVLQS (195 aa)) constitute a KARI N-terminal Rossmann domain. NADP(+)-binding positions include 45–48 (CGAQ), Arg-68, Arg-76, Ser-78, and 108–110 (DKQ). Residue His-132 is part of the active site. Gly-158 provides a ligand contact to NADP(+). KARI C-terminal knotted domains are found at residues 209 to 344 (SFVA…NAPQ) and 345 to 485 (FDGK…MKDM). Mg(2+) is bound by residues Asp-217, Glu-221, Glu-389, and Glu-393. Ser-414 contributes to the substrate binding site.

The protein belongs to the ketol-acid reductoisomerase family. The cofactor is Mg(2+).

It catalyses the reaction (2R)-2,3-dihydroxy-3-methylbutanoate + NADP(+) = (2S)-2-acetolactate + NADPH + H(+). It carries out the reaction (2R,3R)-2,3-dihydroxy-3-methylpentanoate + NADP(+) = (S)-2-ethyl-2-hydroxy-3-oxobutanoate + NADPH + H(+). The protein operates within amino-acid biosynthesis; L-isoleucine biosynthesis; L-isoleucine from 2-oxobutanoate: step 2/4. Its pathway is amino-acid biosynthesis; L-valine biosynthesis; L-valine from pyruvate: step 2/4. Functionally, involved in the biosynthesis of branched-chain amino acids (BCAA). Catalyzes an alkyl-migration followed by a ketol-acid reduction of (S)-2-acetolactate (S2AL) to yield (R)-2,3-dihydroxy-isovalerate. In the isomerase reaction, S2AL is rearranged via a Mg-dependent methyl migration to produce 3-hydroxy-3-methyl-2-ketobutyrate (HMKB). In the reductase reaction, this 2-ketoacid undergoes a metal-dependent reduction by NADPH to yield (R)-2,3-dihydroxy-isovalerate. The polypeptide is Ketol-acid reductoisomerase (NADP(+)) (Pectobacterium atrosepticum (strain SCRI 1043 / ATCC BAA-672) (Erwinia carotovora subsp. atroseptica)).